A 957-amino-acid polypeptide reads, in one-letter code: MNYRQLFLLQNVNLESNYLLKRVCLSLKLSPCKLTRKFHHACPSSSKVLKYFRITGCLINFGKQPANDHHLWGHCGARLKHTQSDLIDRFKNANLKSVNEENLKKFFSELENHGNIRQWLKDKFEKDKRAAVCPTTTKSEEEKLENDFEYSFDLEDFSSENFRQYDRGDLLVFYRGSEGIELAACTGTNVWNYSNVLTSINENGTIKEFRTSRVLLRCPNVFKKLKEVQQPLSDVSVPSDVLPFTIKLLKKISQRAQDLSRSHRNEFLRILTEFNIPNKLDNSASFSDLLKFVYKTSKPSPYAKISLLHFLLTESKHFLISDHIFSEIQKVYFLPSSQNDSFDDVVACLRQKSTPYLSFIKKARHLIQVSRDKYKLPISTEEIKPVVYSQVTWTEFEKKLLRYLVQEMIAKSIQSLPNTHLCQVYKEVGLQTHERGLTSDQFAKFLTDIGVWASWQPPRLFQQEYSIAGLGTNPQLDAVYERECNHFKKFVKNELKDSLESQRVDLRHLKAFAFDSSSTKEIDDAISVEELGMSNSWLHIHVANPTSTVDIRSPLGTFAERNFQTIYHPNKIVYMLPLNITQKYWSLDSSSTAQRALTFSAKISKNGDILDYKVRPSFISSVIKYTPQQLDKALHSNRSIAKDIVSGPVDEETKGVSNDHMKDILRIYELSKQACFSRLQKFAFVIAQPTPTVELLPNNVPYNLGDLNHPVYWSSFPTISLNVSEGYSLAESVISECMILAGRVSSLFFQEHKLPGIFRGQPYPIMDGVRRKAFETLLSNRSSWGLVETKYSLSVMPLFESSHLASTPVSHFSLGLKDGYIQSTSPLRRFTDFFTHHQIQSVLLKTPKNTIPDGILRGKLNLYNQKEKSIKTIGRYINRFWALKYIERLPKVQKNIYHGYLMVSELSTPQVMLEELGVKAHIDILPDEAFRLANTRQAFTIKDVFPESNILLVALAT.

Residues 1–54 (MNYRQLFLLQNVNLESNYLLKRVCLSLKLSPCKLTRKFHHACPSSSKVLKYFRI) constitute a mitochondrion transit peptide. The 341-residue stretch at 503–843 (RVDLRHLKAF…FTHHQIQSVL (341 aa)) folds into the RNB domain.

This sequence belongs to the RNR ribonuclease family.

It localises to the mitochondrion. It carries out the reaction Exonucleolytic cleavage in the 3'- to 5'-direction to yield nucleoside 5'-phosphates.. Required for intron-independent turnover and processing of mitochondrial RNA. Participates in 3'-mtRNA processing where it hydrolyzes single-stranded RNA or partially double-stranded RNA with 3'-single-stranded tails. The chain is Exoribonuclease II, mitochondrial (rpm1) from Schizosaccharomyces pombe (strain 972 / ATCC 24843) (Fission yeast).